Here is a 500-residue protein sequence, read N- to C-terminus: Glutamate--tRNA ligase (500 aa).

The 'HIGH' region motif lies at 12-22 (PSPTGHLHIGN). Positions 259–263 (KLSKR) match the 'KMSKS' region motif. Lysine 262 provides a ligand contact to ATP.

It belongs to the class-I aminoacyl-tRNA synthetase family. Glutamate--tRNA ligase type 1 subfamily. In terms of assembly, monomer.

Its subcellular location is the cytoplasm. The catalysed reaction is tRNA(Glu) + L-glutamate + ATP = L-glutamyl-tRNA(Glu) + AMP + diphosphate. In terms of biological role, catalyzes the attachment of glutamate to tRNA(Glu) in a two-step reaction: glutamate is first activated by ATP to form Glu-AMP and then transferred to the acceptor end of tRNA(Glu). This chain is Glutamate--tRNA ligase, found in Lactobacillus delbrueckii subsp. bulgaricus.